The chain runs to 379 residues: L-lactate dehydrogenase (379 aa).

The FMN hydroxy acid dehydrogenase domain maps to 1-379; that stretch reads MIISASTDYR…ITSDLLVKER (379 aa). Position 24 (Y24) interacts with substrate. S106 and Q127 together coordinate FMN. A substrate-binding site is contributed by Y129. T155 lines the FMN pocket. Position 164 (R164) interacts with substrate. Residue K251 coordinates FMN. H275 (proton acceptor) is an active-site residue. Residue R278 coordinates substrate. 306–330 serves as a coordination point for FMN; that stretch reads DSGIRTGLDVVRMLALGADTVLLGR.

This sequence belongs to the FMN-dependent alpha-hydroxy acid dehydrogenase family. In terms of assembly, homotetramer. FMN serves as cofactor.

The protein localises to the cell inner membrane. The enzyme catalyses (S)-lactate + A = pyruvate + AH2. Its function is as follows. Catalyzes the conversion of L-lactate to pyruvate. Is coupled to the respiratory chain. In Ectopseudomonas mendocina (strain ymp) (Pseudomonas mendocina), this protein is L-lactate dehydrogenase.